Reading from the N-terminus, the 79-residue chain is UPF0180 protein BCE_1513 (79 aa).

The protein belongs to the UPF0180 family.

This chain is UPF0180 protein BCE_1513, found in Bacillus cereus (strain ATCC 10987 / NRS 248).